Reading from the N-terminus, the 338-residue chain is DNA-directed RNA polymerase I subunit RPA43 (338 aa).

The interval 209 to 338 is disordered; it reads EVSEEVTENG…PKRKGKSNFL (130 aa). A phosphoserine mark is found at Ser-242, Ser-304, and Ser-316. Thr-322 carries the phosphothreonine modification. Phosphoserine is present on Ser-328. The span at 328-338 shows a compositional bias: basic residues; sequence SPKRKGKSNFL.

It belongs to the eukaryotic RPA43 RNA polymerase subunit family. In terms of assembly, component of the RNA polymerase I (Pol I) complex consisting of 13 subunits: a ten-subunit catalytic core composed of POLR1A/RPA1, POLR1B/RPA2, POLR1C/RPAC1, POLR1D/RPAC2, POLR1H/RPA12, POLR2E/RPABC1, POLR2F/RPABC2, POLR2H/RPABC3, POLR2K/RPABC4 and POLR2L/RPABC5; a mobile stalk subunit POLR1F/RPA43 protruding from the core and additional subunits homologous to general transcription factors POLR1E/RPA49 and POLR1G/RPA34. Interacts with RRN3/TIF-IA. As to expression, widely expressed. Expressed in all fetal and adult tissues tested, with highest expression in fetal lung, liver, and kidney, and low expression in all adult tissues.

The protein localises to the nucleus. It localises to the nucleolus. Its function is as follows. Component of RNA polymerase I (Pol I), a DNA-dependent RNA polymerase which synthesizes ribosomal RNA precursors using the four ribonucleoside triphosphates as substrates. Through its association with RRN3/TIF-IA may be involved in recruitment of Pol I to rDNA promoters. The polypeptide is DNA-directed RNA polymerase I subunit RPA43 (Homo sapiens (Human)).